The primary structure comprises 464 residues: Secretion-regulating guanine nucleotide exchange factor (464 aa).

RCC1 repeat units follow at residues 14–66 (AAAL…VVTD), 68–118 (GSLF…ILTE), 119–170 (NGQV…AATA), 172–229 (GTVF…SLTD), 230–282 (AGEL…AQTV), 283–349 (TGKV…LAVI), and 350–401 (GGVC…ALCQ). Residues 301–313 (VETREGWESEKQD) show a composition bias toward basic and acidic residues. The disordered stretch occupies residues 301–323 (VETREGWESEKQDPSLPGSGPQK). The disordered stretch occupies residues 411-464 (HPSVTSPSPDATKEARSQEAMEQERNQKERHAETSPQAQSDRFRNGGLVAETLE). Over residues 421–443 (ATKEARSQEAMEQERNQKERHAE) the composition is skewed to basic and acidic residues. Ser-427 carries the post-translational modification Phosphoserine.

In terms of assembly, interacts with SEC5. The interaction occurs only in the presence of magnesium or manganese and is stimulated by dCTP or GTP.

It localises to the cytoplasm. It is found in the nucleus. Probable guanine nucleotide exchange factor (GEF), which may be involved in the secretion process. The sequence is that of Secretion-regulating guanine nucleotide exchange factor (SERGEF) from Bos taurus (Bovine).